Consider the following 24-residue polypeptide: Protein YriA (24 aa).

The sequence is that of Protein YriA from Escherichia coli (strain K12).